The chain runs to 257 residues: Imidazole glycerol phosphate synthase subunit HisF (257 aa).

Catalysis depends on residues aspartate 11 and aspartate 130.

This sequence belongs to the HisA/HisF family. As to quaternary structure, heterodimer of HisH and HisF.

It is found in the cytoplasm. It carries out the reaction 5-[(5-phospho-1-deoxy-D-ribulos-1-ylimino)methylamino]-1-(5-phospho-beta-D-ribosyl)imidazole-4-carboxamide + L-glutamine = D-erythro-1-(imidazol-4-yl)glycerol 3-phosphate + 5-amino-1-(5-phospho-beta-D-ribosyl)imidazole-4-carboxamide + L-glutamate + H(+). The protein operates within amino-acid biosynthesis; L-histidine biosynthesis; L-histidine from 5-phospho-alpha-D-ribose 1-diphosphate: step 5/9. Its function is as follows. IGPS catalyzes the conversion of PRFAR and glutamine to IGP, AICAR and glutamate. The HisF subunit catalyzes the cyclization activity that produces IGP and AICAR from PRFAR using the ammonia provided by the HisH subunit. The protein is Imidazole glycerol phosphate synthase subunit HisF of Afipia carboxidovorans (strain ATCC 49405 / DSM 1227 / KCTC 32145 / OM5) (Oligotropha carboxidovorans).